Reading from the N-terminus, the 127-residue chain is Protein YwpG (127 aa).

In terms of assembly, interacts with both the D1 and D2 domains of dynamin-like protein DynA.

It is found in the cell membrane. This is Protein YwpG (ywpG) from Bacillus subtilis (strain 168).